The sequence spans 185 residues: ATP synthase subunit delta (185 aa).

This sequence belongs to the ATPase delta chain family. As to quaternary structure, F-type ATPases have 2 components, F(1) - the catalytic core - and F(0) - the membrane proton channel. F(1) has five subunits: alpha(3), beta(3), gamma(1), delta(1), epsilon(1). CF(0) has four main subunits: a(1), b(1), b'(1) and c(10-14). The alpha and beta chains form an alternating ring which encloses part of the gamma chain. F(1) is attached to F(0) by a central stalk formed by the gamma and epsilon chains, while a peripheral stalk is formed by the delta, b and b' chains.

It is found in the cellular thylakoid membrane. F(1)F(0) ATP synthase produces ATP from ADP in the presence of a proton or sodium gradient. F-type ATPases consist of two structural domains, F(1) containing the extramembraneous catalytic core and F(0) containing the membrane proton channel, linked together by a central stalk and a peripheral stalk. During catalysis, ATP synthesis in the catalytic domain of F(1) is coupled via a rotary mechanism of the central stalk subunits to proton translocation. In terms of biological role, this protein is part of the stalk that links CF(0) to CF(1). It either transmits conformational changes from CF(0) to CF(1) or is implicated in proton conduction. The sequence is that of ATP synthase subunit delta from Acaryochloris marina (strain MBIC 11017).